A 559-amino-acid polypeptide reads, in one-letter code: Glucose-6-phosphate isomerase 2 (559 aa).

Glu-367 serves as the catalytic Proton donor. Residues His-398 and Lys-522 contribute to the active site.

The protein belongs to the GPI family.

The protein resides in the cytoplasm. It carries out the reaction alpha-D-glucose 6-phosphate = beta-D-fructose 6-phosphate. The protein operates within carbohydrate biosynthesis; gluconeogenesis. It functions in the pathway carbohydrate degradation; glycolysis; D-glyceraldehyde 3-phosphate and glycerone phosphate from D-glucose: step 2/4. Functionally, catalyzes the reversible isomerization of glucose-6-phosphate to fructose-6-phosphate. This is Glucose-6-phosphate isomerase 2 from Chromohalobacter salexigens (strain ATCC BAA-138 / DSM 3043 / CIP 106854 / NCIMB 13768 / 1H11).